The primary structure comprises 237 residues: UPF0758 protein Aave_3773 (237 aa).

Residues 115 to 237 (LFHSPRAVRD…SLSMAEEGLI (123 aa)) form the MPN domain. Histidine 186, histidine 188, and aspartate 199 together coordinate Zn(2+). Positions 186–199 (HNHPSGQVQPSRAD) match the JAMM motif motif.

This sequence belongs to the UPF0758 family.

This is UPF0758 protein Aave_3773 from Paracidovorax citrulli (strain AAC00-1) (Acidovorax citrulli).